Reading from the N-terminus, the 229-residue chain is Heptaprenylglyceryl phosphate synthase (229 aa).

A sn-glycerol 1-phosphate-binding site is contributed by K12. Residues D14 and S40 each contribute to the Mg(2+) site. Sn-glycerol 1-phosphate-binding positions include 159-164 (YLEYSG), G189, and 209-210 (GN).

It belongs to the GGGP/HepGP synthase family. Group I subfamily. Homodimer. It depends on Mg(2+) as a cofactor.

It catalyses the reaction sn-glycerol 1-phosphate + all-trans-heptaprenyl diphosphate = 3-heptaprenyl-sn-glycero-1-phosphate + diphosphate. The protein operates within membrane lipid metabolism; glycerophospholipid metabolism. Functionally, prenyltransferase that catalyzes in vivo the transfer of the heptaprenyl moiety of heptaprenyl pyrophosphate (HepPP; 35 carbon atoms) to the C3 hydroxyl of sn-glycerol-1-phosphate (G1P), producing heptaprenylglyceryl phosphate (HepGP). This reaction is an ether-bond-formation step in the biosynthesis of archaea-type G1P-based membrane lipids found in Bacillales. The polypeptide is Heptaprenylglyceryl phosphate synthase (Bacillus anthracis (strain A0248)).